The sequence spans 168 residues: Ribosome maturation factor RimP (168 aa).

Belongs to the RimP family.

The protein resides in the cytoplasm. In terms of biological role, required for maturation of 30S ribosomal subunits. This Bordetella parapertussis (strain 12822 / ATCC BAA-587 / NCTC 13253) protein is Ribosome maturation factor RimP.